A 248-amino-acid chain; its full sequence is MAGHSQFKNIMHRKGRVDAVRSKVFSKLAREITVAAKLGTPDPSMNPRLRAAILAARAENMPKDNIERAIKKAVGGDGENYEEIRYEGYGPGGAALIVEAQTDNRNRTASDVRSAFTKSGGSLAETGAVAFMFDRVGVIAFAPDVADADTMLEAAIEAGADDVRSDTEGHEVICAQDAYGDVSKALEGRFGEPRRTGLIWKAQNTIDVDDETGEKLIRLVEVIEDQDDVQNVYVNFALSEALVEKMGA.

The protein belongs to the TACO1 family.

Its subcellular location is the cytoplasm. This chain is Probable transcriptional regulatory protein Mchl_0946, found in Methylorubrum extorquens (strain CM4 / NCIMB 13688) (Methylobacterium extorquens).